The following is a 236-amino-acid chain: uncharacterized protein (236 aa).

Disordered stretches follow at residues 1–48, 67–122, and 134–192; these read MHLR…RTFS, VHTP…HSPR, and KLHP…PNNT. Residues 85–99 show a composition bias toward basic residues; the sequence is RAHRTAKHPARRQSC. The segment covering 180 to 189 has biased composition (pro residues); the sequence is PSPAIKPSPP.

This is an uncharacterized protein from Encephalitozoon cuniculi (strain GB-M1) (Microsporidian parasite).